The primary structure comprises 373 residues: Alpha-ketoglutarate dependent kainoid synthase (373 aa).

The 117-residue stretch at 204-320 (TINSKKMFFT…RSSLITFYEP (117 aa)) folds into the Fe2OG dioxygenase domain. Residues histidine 235, aspartate 237, and histidine 296 each coordinate Fe cation. Arginine 311 is a 2-oxoglutarate binding site.

This sequence belongs to the iron/ascorbate-dependent oxidoreductase family. Requires Fe(2+) as cofactor.

The catalysed reaction is N-(7'-carboxy-7'-demethylgeranyl)-L-glutamate + 2-oxoglutarate + O2 = isodomoate A + succinate + CO2 + H2O. It catalyses the reaction N-geranyl-L-glutamate + 2-oxoglutarate + O2 = dainate A + succinate + CO2 + H2O. Its pathway is secondary metabolite biosynthesis. In terms of biological role, iron/ascorbate-dependent oxidoreductase: part of the gene cluster that mediates the biosynthesis of domoic acid (DA) and derivatives, natural products with neurochemical activity acting as ionotropic glutamate receptor (iGluR) agonists, thus being neurotoxins causing amnesic shellfish poisoning (ASP). Catalyzes the conversion of 7'-N-carboxy-L-geranyl-L-glutamic acid (cNGG) to isodomoic acid-A. Also mediates the conversion of N-geranyl-L-glutamic acid (L-NGG) to dainic acid A. This chain is Alpha-ketoglutarate dependent kainoid synthase, found in Pseudo-nitzschia multiseries (Marine planktonic diatom).